The chain runs to 70 residues: NAD(P)H-quinone oxidoreductase subunit O (70 aa).

This sequence belongs to the complex I NdhO subunit family. As to quaternary structure, NDH-1 can be composed of about 15 different subunits; different subcomplexes with different compositions have been identified which probably have different functions.

The protein resides in the cellular thylakoid membrane. It catalyses the reaction a plastoquinone + NADH + (n+1) H(+)(in) = a plastoquinol + NAD(+) + n H(+)(out). The catalysed reaction is a plastoquinone + NADPH + (n+1) H(+)(in) = a plastoquinol + NADP(+) + n H(+)(out). Its function is as follows. NDH-1 shuttles electrons from an unknown electron donor, via FMN and iron-sulfur (Fe-S) centers, to quinones in the respiratory and/or the photosynthetic chain. The immediate electron acceptor for the enzyme in this species is believed to be plastoquinone. Couples the redox reaction to proton translocation, and thus conserves the redox energy in a proton gradient. Cyanobacterial NDH-1 also plays a role in inorganic carbon-concentration. This chain is NAD(P)H-quinone oxidoreductase subunit O, found in Trichormus variabilis (strain ATCC 29413 / PCC 7937) (Anabaena variabilis).